Consider the following 169-residue polypeptide: Cuticle protein 21 (169 aa).

6 repeat units span residues 21 to 24 (AAPV), 27 to 30 (AAPA), 33 to 36 (AAPV), 39 to 42 (AAPA), 47 to 50 (AAPV), and 53 to 56 (AAPA). In terms of domain architecture, Chitin-binding type R&amp;R spans 65–135 (NPQYSYAYNV…KEAGAHPAPV (71 aa)). 3 repeat units span residues 140 to 143 (AAPV), 146 to 149 (AAPA), and 160 to 163 (AAPA).

In terms of biological role, component of the cuticle of migratory locust which contains more than 100 different structural proteins. This chain is Cuticle protein 21 (ACP21), found in Locusta migratoria (Migratory locust).